The chain runs to 96 residues: MNQEKVLKTLLMPIVSEKMTMLSANNQYAFKVRMDSSKREIKAAVEILLGVNVENVTTLIVKGKKKIFKGRTGSRPNWKKAMVKVSAGQIIDVNRT.

The protein belongs to the universal ribosomal protein uL23 family. In terms of assembly, part of the 50S ribosomal subunit. Contacts protein L29, and trigger factor when it is bound to the ribosome.

In terms of biological role, one of the early assembly proteins it binds 23S rRNA. One of the proteins that surrounds the polypeptide exit tunnel on the outside of the ribosome. Forms the main docking site for trigger factor binding to the ribosome. The protein is Large ribosomal subunit protein uL23 of Vesicomyosocius okutanii subsp. Calyptogena okutanii (strain HA).